We begin with the raw amino-acid sequence, 530 residues long: AA9 family lytic polysaccharide monooxygenase C (530 aa).

The signal sequence occupies residues 1 to 18 (MQLKSTVHFLSLLAYTAA). 2 residues coordinate Cu(2+): H19 and H103. 2 disulfide bridges follow: C72–C190 and C114–C118. N150 carries N-linked (GlcNAc...) asparagine glycosylation. Residue Q185 coordinates O2. Y187 serves as a coordination point for Cu(2+). Positions 238-251 (YGSGSSSSQNSVES) are enriched in low complexity. Disordered stretches follow at residues 238–279 (YGSG…STSA), 297–329 (ESSS…SSSA), 348–375 (YSSA…KLSS), and 492–512 (GNGA…GTTP). Residues 312-324 (KSVEAKETTKVEE) show a composition bias toward basic and acidic residues. Residues 348–368 (YSSASPSSSPVLSSSKPASTS) are compositionally biased toward low complexity.

It belongs to the polysaccharide monooxygenase AA9 family. Requires Cu(2+) as cofactor.

The protein resides in the secreted. The enzyme catalyses [(1-&gt;4)-beta-D-glucosyl]n+m + reduced acceptor + O2 = 4-dehydro-beta-D-glucosyl-[(1-&gt;4)-beta-D-glucosyl]n-1 + [(1-&gt;4)-beta-D-glucosyl]m + acceptor + H2O.. Lytic polysaccharide monooxygenase (LPMO) that depolymerizes polysaccharides via the oxidation of scissile alpha- or beta-(1-4)-glycosidic bonds, yielding C1 or C4 oxidation products. Catalysis by LPMOs requires the reduction of the active-site copper from Cu(II) to Cu(I) by a reducing agent and H(2)O(2) or O(2) as a cosubstrate. Amorphous cellulose is not a suitable substrate for LPMO9C, which may act at the surface of cellulose microfibrils without any release of soluble products. The sequence is that of AA9 family lytic polysaccharide monooxygenase C from Geotrichum candidum (Oospora lactis).